A 481-amino-acid polypeptide reads, in one-letter code: Glutamine synthetase (481 aa).

One can recognise a GS beta-grasp domain in the interval 22-106 (NEVEFVDFRF…VFCDVYDVYK (85 aa)). The 368-residue stretch at 114-481 (PRSIAKKALK…PFEFITTYSC (368 aa)) folds into the GS catalytic domain. Residues glutamate 139, glutamate 141, glutamate 223, and glutamate 230 each coordinate Mg(2+). L-glutamate contacts are provided by residues 274–275 (NG) and glycine 275. Mg(2+) is bound at residue histidine 279. ATP contacts are provided by residues 281-283 (HVS) and serine 283. The L-glutamate site is built by arginine 331, glutamate 337, and arginine 349. Residues arginine 349 and arginine 354 each contribute to the ATP site. Mg(2+) is bound at residue glutamate 367. Residue arginine 369 participates in L-glutamate binding.

It belongs to the glutamine synthetase family. As to quaternary structure, oligomer of 12 subunits arranged in the form of two hexameric ring. It depends on Mg(2+) as a cofactor.

The protein resides in the cytoplasm. The enzyme catalyses L-glutamate + NH4(+) + ATP = L-glutamine + ADP + phosphate + H(+). Its activity is regulated as follows. The activity of this enzyme could be controlled by adenylation under conditions of abundant glutamine. Its function is as follows. Catalyzes the ATP-dependent biosynthesis of glutamine from glutamate and ammonia. The protein is Glutamine synthetase of Helicobacter pylori (strain J99 / ATCC 700824) (Campylobacter pylori J99).